The sequence spans 232 residues: Ubiquinone biosynthesis O-methyltransferase (232 aa).

S-adenosyl-L-methionine contacts are provided by Arg-36, Gly-55, Asp-76, and Met-120.

It belongs to the methyltransferase superfamily. UbiG/COQ3 family.

It catalyses the reaction a 3-demethylubiquinol + S-adenosyl-L-methionine = a ubiquinol + S-adenosyl-L-homocysteine + H(+). It carries out the reaction a 3-(all-trans-polyprenyl)benzene-1,2-diol + S-adenosyl-L-methionine = a 2-methoxy-6-(all-trans-polyprenyl)phenol + S-adenosyl-L-homocysteine + H(+). The protein operates within cofactor biosynthesis; ubiquinone biosynthesis. In terms of biological role, O-methyltransferase that catalyzes the 2 O-methylation steps in the ubiquinone biosynthetic pathway. In Burkholderia multivorans (strain ATCC 17616 / 249), this protein is Ubiquinone biosynthesis O-methyltransferase.